A 273-amino-acid polypeptide reads, in one-letter code: Thymidylate synthase (273 aa).

R31 provides a ligand contact to dUMP. H61 is a (6R)-5,10-methylene-5,6,7,8-tetrahydrofolate binding site. 136–137 is a binding site for dUMP; it reads RR. C156 acts as the Nucleophile in catalysis. Residues 176–179, N187, and 217–219 each bind dUMP; these read RSAD and HIY. Position 179 (D179) interacts with (6R)-5,10-methylene-5,6,7,8-tetrahydrofolate. Position 272 (A272) interacts with (6R)-5,10-methylene-5,6,7,8-tetrahydrofolate.

Belongs to the thymidylate synthase family. Bacterial-type ThyA subfamily. As to quaternary structure, homodimer.

It localises to the cytoplasm. The catalysed reaction is dUMP + (6R)-5,10-methylene-5,6,7,8-tetrahydrofolate = 7,8-dihydrofolate + dTMP. Its pathway is pyrimidine metabolism; dTTP biosynthesis. Its function is as follows. Catalyzes the reductive methylation of 2'-deoxyuridine-5'-monophosphate (dUMP) to 2'-deoxythymidine-5'-monophosphate (dTMP) while utilizing 5,10-methylenetetrahydrofolate (mTHF) as the methyl donor and reductant in the reaction, yielding dihydrofolate (DHF) as a by-product. This enzymatic reaction provides an intracellular de novo source of dTMP, an essential precursor for DNA biosynthesis. The chain is Thymidylate synthase from Corynebacterium jeikeium (strain K411).